Here is a 154-residue protein sequence, read N- to C-terminus: Transcriptional repressor NrdR (154 aa).

A zinc finger spans residues 3–34 (CPFCAHPDTRVADSRLMEERNAVRRRRHCPNC). Residues 49 to 139 (PAVIGPDKKR…LHKRFDNPAD (91 aa)) enclose the ATP-cone domain.

The protein belongs to the NrdR family. Requires Zn(2+) as cofactor.

Negatively regulates transcription of bacterial ribonucleotide reductase nrd genes and operons by binding to NrdR-boxes. The sequence is that of Transcriptional repressor NrdR from Neisseria meningitidis serogroup B (strain ATCC BAA-335 / MC58).